Consider the following 603-residue polypeptide: Probable NOT transcription complex subunit VIP2 (603 aa).

Polar residues-rich tracts occupy residues 1–28 (MQGTLTSRNTAINNVPSSGVQQSGNNLS) and 36–70 (NLPSALSQIPQGNSHGHSGMTSRGGTSVVGNPGYS). Disordered stretches follow at residues 1-70 (MQGT…PGYS), 212-242 (NDGSPFDINDFPQLSSRPSSAGGPQGQLGSL), 306-335 (AGFNLGGTYSSNRPQQQLQHAPSVSSGGVS), and 355-377 (SSHSSYQQQGGGPPGIGLRPLNS). Residues 312–335 (GTYSSNRPQQQLQHAPSVSSGGVS) show a composition bias toward polar residues.

It belongs to the CNOT2/3/5 family. As to quaternary structure, binds to VIP1. Interacts with Agrobacterium tumefaciens VirE2. Forms a complex made of Agrobacterium VirE2, VIP1, VIP2 and single-stranded DNA (ssDNA).

It is found in the nucleus. Functionally, transcriptional regulator required for Agrobacterium-mediated stable genetic transformation by T-DNA integration in host genome, but not for T-DNA transient expression. This is Probable NOT transcription complex subunit VIP2 (VIP2) from Nicotiana benthamiana.